The following is a 346-amino-acid chain: Biotin synthase (346 aa).

Residues 38-256 form the Radical SAM core domain; sequence RQVQVSTLLS…IAVARIMMPT (219 aa). 3 residues coordinate [4Fe-4S] cluster: cysteine 53, cysteine 57, and cysteine 60. [2Fe-2S] cluster-binding residues include cysteine 97, cysteine 128, cysteine 188, and arginine 260.

The protein belongs to the radical SAM superfamily. Biotin synthase family. As to quaternary structure, homodimer. Requires [4Fe-4S] cluster as cofactor. The cofactor is [2Fe-2S] cluster.

The catalysed reaction is (4R,5S)-dethiobiotin + (sulfur carrier)-SH + 2 reduced [2Fe-2S]-[ferredoxin] + 2 S-adenosyl-L-methionine = (sulfur carrier)-H + biotin + 2 5'-deoxyadenosine + 2 L-methionine + 2 oxidized [2Fe-2S]-[ferredoxin]. Its pathway is cofactor biosynthesis; biotin biosynthesis; biotin from 7,8-diaminononanoate: step 2/2. In terms of biological role, catalyzes the conversion of dethiobiotin (DTB) to biotin by the insertion of a sulfur atom into dethiobiotin via a radical-based mechanism. This is Biotin synthase from Escherichia coli (strain K12 / DH10B).